A 60-amino-acid chain; its full sequence is UPF0434 protein YcaR (60 aa).

Belongs to the UPF0434 family.

This Escherichia coli O81 (strain ED1a) protein is UPF0434 protein YcaR.